We begin with the raw amino-acid sequence, 161 residues long: 6,7-dimethyl-8-ribityllumazine synthase (161 aa).

5-amino-6-(D-ribitylamino)uracil contacts are provided by residues W26, 58–60 (SFE), and 81–83 (VVI). 86-87 (GT) lines the (2S)-2-hydroxy-3-oxobutyl phosphate pocket. H89 serves as the catalytic Proton donor. 5-amino-6-(D-ribitylamino)uracil is bound at residue F114. R128 is a binding site for (2S)-2-hydroxy-3-oxobutyl phosphate.

The protein belongs to the DMRL synthase family.

It carries out the reaction (2S)-2-hydroxy-3-oxobutyl phosphate + 5-amino-6-(D-ribitylamino)uracil = 6,7-dimethyl-8-(1-D-ribityl)lumazine + phosphate + 2 H2O + H(+). It functions in the pathway cofactor biosynthesis; riboflavin biosynthesis; riboflavin from 2-hydroxy-3-oxobutyl phosphate and 5-amino-6-(D-ribitylamino)uracil: step 1/2. Functionally, catalyzes the formation of 6,7-dimethyl-8-ribityllumazine by condensation of 5-amino-6-(D-ribitylamino)uracil with 3,4-dihydroxy-2-butanone 4-phosphate. This is the penultimate step in the biosynthesis of riboflavin. The protein is 6,7-dimethyl-8-ribityllumazine synthase of Streptomyces avermitilis (strain ATCC 31267 / DSM 46492 / JCM 5070 / NBRC 14893 / NCIMB 12804 / NRRL 8165 / MA-4680).